Consider the following 217-residue polypeptide: Growth factor receptor-bound protein 2 (217 aa).

Methionine 1 is subject to N-acetylmethionine. An SH3 1 domain is found at 1–58 (MEAIAKYDFKATADDELSFKRGDILKVLNEECDQNWYKAELNGKDGFIPKNYIEMKPH). 3 positions are modified to N6-acetyllysine: lysine 6, lysine 50, and lysine 109. Positions 60 to 152 (WFFGKIPRAK…NQQIFLRDIE (93 aa)) constitute an SH2 domain. Lysine 109 is covalently cross-linked (Glycyl lysine isopeptide (Lys-Gly) (interchain with G-Cter in ubiquitin)). Positions 156 to 215 (QQPTYVQALFDFDPQEDGELGFRRGDFIHVMDNSDPNWWKGACHGQTGMFPRNYVTPVNR) constitute an SH3 2 domain. Tyrosine 209 bears the Phosphotyrosine mark. Threonine 211 carries the phosphothreonine modification.

This sequence belongs to the GRB2/sem-5/DRK family. Homodimer. Associates (via SH2 domain) with activated EGF and PDGF receptors (tyrosine phosphorylated). Interacts with PDGFRA (tyrosine phosphorylated); the interaction may be indirect. Also associates to other cellular Tyr-phosphorylated proteins such as SIT1, IRS1, IRS2, IRS4, SHC and LNK; probably via the concerted action of both its SH2 and SH3 domains. It also seems to interact with RAS in the signaling pathway leading to DNA synthesis. Interacts with SOS1. Forms a complex with MUC1 and SOS1, through interaction of the SH3 domains with SOS1 and the SH2 domain with phosphorylated MUC1. Interacts with phosphorylated MET. Interacts with phosphorylated TOM1L1. Interacts with the phosphorylated C-terminus of SH2B2. Interacts with phosphorylated SIT1, LAX1, LAT, LAT2 and LIME1 upon TCR and/or BCR activation. Interacts with NISCH, PTPNS1 and REPS2. Interacts with syntrophin SNTA1. Interacts (via SH3 domains) with REPS1. Interacts (via SH3 domains) with PIK3C2B. Interacts with CBL and CBLB. Interacts with AJUBA and CLNK. Interacts (via SH2 domain) with TEK/TIE2 (tyrosine phosphorylated). Interacts with SHB, INPP5D/SHIP1, SKAP1 and SKAP2. Interacts with PTPN11. Interacts with PRNP. Interacts with RALGPS1. Interacts with HCST. Interacts with KDR. Interacts with FLT1 (tyrosine-phosphorylated). Interacts with GAPT and PTPRE. Interacts (via SH2 domain) with KIF26A. Interacts (via SH3 2) with GAB2. Interacts with ADAM15. Interacts with THEMIS2. Interacts (via SH2 domain) with AXL (phosphorylated). Interacts (via SH2 domain) with KIT (phosphorylated). Interacts with PTPRJ and BCR. Interacts with PTPN23. Interacts with FLT4 (tyrosine phosphorylated). Interacts with EPHB1 and SHC1; activates the MAPK/ERK cascade to regulate cell migration. Part of a complex including TNK2, GRB2, LTK and one receptor tyrosine kinase (RTK) such as AXL and PDGFRL, in which GRB2 promotes RTK recruitment by TNK2. Interacts (via SH2 domain) with CSF1R (tyrosine phosphorylated). Interacts with ERBB4. Interacts with NTRK1 (phosphorylated upon ligand-binding). Interacts with PTK2/FAK1 (tyrosine phosphorylated). Interacts with PTK2B/PYK2 (tyrosine phosphorylated). Interacts (via SH3 domains) with GAREM1 isoform 1 (via proline-rich domain and tyrosine phosphorylated); the interaction occurs upon EGF stimulation. Interacts with DAB2. Interacts with TESPA1. Interacts with PLCG1, LAT and THEMIS upon TCR activation in thymocytes; the association is weaker in the absence of TESPA1. Interacts with CD28. Interacts with RAB13; may recruit RAB13 to the leading edge of migrating endothelial cells where it can activate RHOA. Interacts with ASAP3 (phosphorylated form). Interacts (via SH2 domain) with PTPRH (phosphorylated form). Interacts with PTPRO (phosphorylated form). Interacts with PTPRB (phosphorylated form). Interacts (via SH3 domain 2) with PRR14 (via proline-rich region). Interacts with FCRL6 (tyrosine phosphorylated form). Interacts with RHEX (via tyrosine-phosphorylated form). Interacts with DENND2B. Interacts with SPRY2. Interacts with LRRC8A. Interacts with PEAK1. Interacts with CD28. Interacts with FCRL1. Interacts with PCNA. Interacts with CD19. Interacts with BECN1. Interacts with RAD51; the interaction inhibits RAD51 ATPase to stabilize RAD51-DNA complex at stalled replication forks. Interacts with MRE11; this interaction recruits MRE11 to the DNA damage sites. Interacts with RIPK1 ans SQSTM1; these interactions play a critical role in regulating programmed necrosis. Interacts with AGO2; this interaction is important for the formation of a ternary complex containing GRB2, AGO2 and DICER1. Interacts with TIGIT; this interaction inhibits PI3K and MAPK signaling cascades. Interacts with CD226; this interaction leads to activation of VAV1, PI3K and PLCG1. As to quaternary structure, interacts (via SH2-domain) with SCIMP; this interaction is dependent on phosphorylation of SCIMP 'Tyr-69'. In terms of assembly, interacts with SOS1; this interaction competes with GRB2 to bind SOS1 via its N-terminal SH3 domain. (Microbial infection) Interacts (via SH3 domain) with hepatitis E virus/HEV ORF3 protein. As to quaternary structure, (Microbial infection) Interacts with hepatitis C virus/HCV protein NS5A via its SH3 domains. In terms of assembly, (Microbial infection) Interacts with herpes simplex virus 1 protein UL46. (Microbial infection) Interacts with B19 parvovirus protein 11K. Phosphorylation of Tyr-209 in the C-terminal SH3 domain reduces its binding to SOS1. Post-translationally, ubiquitinated by RNF173, leading to proteasomal degradation and inhibition of the RAF/MEK/ERK pathway. In the nucleus, polyubiquitinated by RBBP6 at Lys-109 at DNA damage sites.

Its subcellular location is the nucleus. The protein resides in the cytoplasm. The protein localises to the endosome. It localises to the golgi apparatus. Functionally, non-enzymatic adapter protein that plays a pivotal role in precisely regulated signaling cascades from cell surface receptors to cellular responses, including signaling transduction and gene expression. Thus, participates in many biological processes including regulation of innate and adaptive immunity, autophagy, DNA repair or necroptosis. Controls signaling complexes at the T-cell antigen receptor to facilitate the activation, differentiation, and function of T-cells. Mechanistically, engagement of the TCR leads to phosphorylation of the adapter protein LAT, which serves as docking site for GRB2. In turn, GRB2 establishes a a connection with SOS1 that acts as a guanine nucleotide exchange factor and serves as a critical regulator of KRAS/RAF1 leading to MAPKs translocation to the nucleus and activation. Functions also a role in B-cell activation by amplifying Ca(2+) mobilization and activation of the ERK MAP kinase pathway upon recruitment to the phosphorylated B-cell antigen receptor (BCR). Plays a role in switching between autophagy and programmed necrosis upstream of EGFR by interacting with components of necrosomes including RIPK1 and with autophagy regulators SQSTM1 and BECN1. Regulates miRNA biogenesis by forming a functional ternary complex with AGO2 and DICER1. Functions in the replication stress response by protecting DNA at stalled replication forks from MRE11-mediated degradation. Mechanistically, inhibits RAD51 ATPase activity to stabilize RAD51 on stalled replication forks. Additionally, directly recruits and later releases MRE11 at DNA damage sites during the homology-directed repair (HDR) process. Does not bind to phosphorylated epidermal growth factor receptor (EGFR) but inhibits EGF-induced transactivation of a RAS-responsive element. Acts as a dominant negative protein over GRB2 and by suppressing proliferative signals, may trigger active programmed cell death. Mechanistically, inhibits RAS-ERK signaling and downstream cell proliferation by competing with GRB2 for SOS1 binding and thus by regulating SOS1 membrane recruitment. This Homo sapiens (Human) protein is Growth factor receptor-bound protein 2 (GRB2).